The chain runs to 202 residues: Probable cytochrome c oxidase subunit 3 (202 aa).

5 helical membrane-spanning segments follow: residues 30 to 50 (VVWLSSELMFFAGLFAMYFTA), 69 to 89 (AVPVTLVLIASSFTCQMGVFS), 101 to 121 (WYVITLLMGLFFVLGQGYEYY), 141 to 161 (LATGFHGLHVTGGLIAFIFLL), and 178 to 198 (IVVSYYWHFVDIVWIALFTVI).

This sequence belongs to the cytochrome c oxidase subunit 3 family.

The protein resides in the cell membrane. It catalyses the reaction 4 Fe(II)-[cytochrome c] + O2 + 8 H(+)(in) = 4 Fe(III)-[cytochrome c] + 2 H2O + 4 H(+)(out). The chain is Probable cytochrome c oxidase subunit 3 (ctaE) from Mycobacterium leprae (strain TN).